A 447-amino-acid polypeptide reads, in one-letter code: Phosphoglucosamine mutase (447 aa).

The active-site Phosphoserine intermediate is the Ser106. Positions 106, 245, 247, and 249 each coordinate Mg(2+). A Phosphoserine modification is found at Ser106.

Belongs to the phosphohexose mutase family. Requires Mg(2+) as cofactor. Activated by phosphorylation.

The enzyme catalyses alpha-D-glucosamine 1-phosphate = D-glucosamine 6-phosphate. Functionally, catalyzes the conversion of glucosamine-6-phosphate to glucosamine-1-phosphate. In Cupriavidus metallidurans (strain ATCC 43123 / DSM 2839 / NBRC 102507 / CH34) (Ralstonia metallidurans), this protein is Phosphoglucosamine mutase.